The primary structure comprises 116 residues: Ig heavy chain V-A1 region BS-5 (116 aa).

Q1 is subject to Pyrrolidone carboxylic acid. Residues 1–107 (QSVEESGGRL…LVHLAFVDVW (107 aa)) enclose the Ig-like domain.

This is Ig heavy chain V-A1 region BS-5 from Oryctolagus cuniculus (Rabbit).